The primary structure comprises 139 residues: MLSPRRTKFRKQQRGRMRGLAHRGSTLNFGEYALQATEPSWITSRQIEAARRAMTRYIKRGGKIWIRVFPDKPVTMRAAETRMGSGKGSPEYWVAVVKPGRIMFELSGVAEPVAREAMRLAAQKLPIKTKFITRQEEYI.

It belongs to the universal ribosomal protein uL16 family. In terms of assembly, part of the 50S ribosomal subunit.

Its function is as follows. Binds 23S rRNA and is also seen to make contacts with the A and possibly P site tRNAs. The protein is Large ribosomal subunit protein uL16 of Crocosphaera subtropica (strain ATCC 51142 / BH68) (Cyanothece sp. (strain ATCC 51142)).